Reading from the N-terminus, the 292-residue chain is Protease HtpX homolog (292 aa).

A run of 2 helical transmembrane segments spans residues 9 to 29 and 31 to 51; these read TGVLMAFLTGLLMAIGYVLGN and TGMMFAFMFALVMNFFSYWYS. Residue histidine 133 coordinates Zn(2+). The active site involves glutamate 134. Histidine 137 contacts Zn(2+). 2 consecutive transmembrane segments (helical) span residues 148–168 and 185–205; these read LAAVMAGAIMMVARWAGWMLW and LGAILLIVLAPIAAMLIQMAI. Glutamate 210 is a binding site for Zn(2+).

Belongs to the peptidase M48B family. Requires Zn(2+) as cofactor.

The protein localises to the cell membrane. The sequence is that of Protease HtpX homolog from Thermococcus sibiricus (strain DSM 12597 / MM 739).